The chain runs to 228 residues: Sec-independent protein translocase protein TatB (228 aa).

A helical membrane pass occupies residues methionine 1–glycine 21. 2 disordered regions span residues arginine 138–aspartate 162 and proline 195–serine 228. Residues alanine 206–serine 228 are compositionally biased toward basic residues.

The protein belongs to the TatB family. In terms of assembly, the Tat system comprises two distinct complexes: a TatABC complex, containing multiple copies of TatA, TatB and TatC subunits, and a separate TatA complex, containing only TatA subunits. Substrates initially bind to the TatABC complex, which probably triggers association of the separate TatA complex to form the active translocon.

The protein resides in the cell inner membrane. Functionally, part of the twin-arginine translocation (Tat) system that transports large folded proteins containing a characteristic twin-arginine motif in their signal peptide across membranes. Together with TatC, TatB is part of a receptor directly interacting with Tat signal peptides. TatB may form an oligomeric binding site that transiently accommodates folded Tat precursor proteins before their translocation. This is Sec-independent protein translocase protein TatB from Neisseria meningitidis serogroup A / serotype 4A (strain DSM 15465 / Z2491).